Here is a 209-residue protein sequence, read N- to C-terminus: Chaperone protein TorD (209 aa).

The protein belongs to the TorD/DmsD family. TorD subfamily.

It localises to the cytoplasm. Involved in the biogenesis of TorA. Acts on TorA before the insertion of the molybdenum cofactor and, as a result, probably favors a conformation of the apoenzyme that is competent for acquiring the cofactor. In Shewanella massilia, this protein is Chaperone protein TorD.